Here is a 447-residue protein sequence, read N- to C-terminus: Tubulin beta chain (447 aa).

GTP-binding residues include Gln-11, Glu-69, Ser-138, Gly-142, Thr-143, Gly-144, Asn-204, and Asn-226. Residue Glu-69 coordinates Mg(2+).

Belongs to the tubulin family. Dimer of alpha and beta chains. A typical microtubule is a hollow water-filled tube with an outer diameter of 25 nm and an inner diameter of 15 nM. Alpha-beta heterodimers associate head-to-tail to form protofilaments running lengthwise along the microtubule wall with the beta-tubulin subunit facing the microtubule plus end conferring a structural polarity. Microtubules usually have 13 protofilaments but different protofilament numbers can be found in some organisms and specialized cells. It depends on Mg(2+) as a cofactor.

The protein localises to the cytoplasm. It localises to the cytoskeleton. Tubulin is the major constituent of microtubules, a cylinder consisting of laterally associated linear protofilaments composed of alpha- and beta-tubulin heterodimers. Microtubules grow by the addition of GTP-tubulin dimers to the microtubule end, where a stabilizing cap forms. Below the cap, tubulin dimers are in GDP-bound state, owing to GTPase activity of alpha-tubulin. This chain is Tubulin beta chain, found in Trichophyton rubrum (Athlete's foot fungus).